The following is a 58-amino-acid chain: Short neurotoxin MS11 (58 aa).

4 cysteine pairs are disulfide-bonded: cysteine 3-cysteine 20, cysteine 13-cysteine 38, cysteine 42-cysteine 50, and cysteine 51-cysteine 56.

It belongs to the three-finger toxin family. Short-chain subfamily. As to expression, expressed by the venom gland.

The protein resides in the secreted. Produces peripheral paralysis by blocking neuromuscular transmission at the postsynaptic site. Binds to and inhibits the endogenous nicotinic acetylcholine receptors (nAChR) in the human rhabdomyosarcoma TE 671 cell line with an IC(50) of 266 mM. Not toxic to mice by intraperitoneal injection or to zebrafish by injection at the back dorsolateral region. The polypeptide is Short neurotoxin MS11 (Micrurus surinamensis (Surinam coral snake)).